Reading from the N-terminus, the 78-residue chain is Calcium/calmodulin-dependent protein kinase II inhibitor 1 (78 aa).

Residues 41–68 (NKRPPKLGQIGRSKRVVIEDDRIDDVLK) are CAMK2 inhibitory domain.

This sequence belongs to the CAMK2N family. As to quaternary structure, interacts with CAMK2B; the presence of Ca(2+)/calmodulin increases the interaction but is not essential. Interacts with CAMK2A; this interaction requires CAMK2A activation by Ca(2+).

Its subcellular location is the synapse. The protein localises to the cell projection. The protein resides in the dendrite. It is found in the postsynaptic density. Functionally, potent and specific inhibitor of CaM-kinase II (CAMK2). Plays a role in the maintenance of long-term retrieval-induced memory in response to contextual fear. Modulates blood pressure and vascular reactivity via regulation of CAMK2 activity in addition to regulation of left ventricular mass. Mediates the NLRP3 inflammasome in cardiomyocytes via acting as an inhibitor of the MAPK14/p38 and MAPK8/JNK pathways, thereby regulating ventricular remodeling and cardiac rhythm post-myocardial infarction. Negatively effects insulin sensitivity and promotes lipid formation in adipose tissues independent of CAMK2 signaling. This Homo sapiens (Human) protein is Calcium/calmodulin-dependent protein kinase II inhibitor 1 (CAMK2N1).